The following is a 243-amino-acid chain: MGHKIHPSGLRLGITQEHRSKWFATSKTYPILLQEDFKIRTFIEKKYGAAGISDVLIARKADQLELELKTARPGVIVGRQGSGIEELRSGIQKTIGDRTRQVRINVVEVERVDADAFLLAEYIAQQLEKRVAFRRTIRMALQRAQRAGVLGLKIQVGGRLNGAEIARTEWTREGRVPLHTLRAEIDYATREANTTYGVLGIKVWVFKGEVLPKEEQTIPVGANPKRKASRRPQQFEDRSNENS.

The KH type-2 domain maps to 39–110; that stretch reads IRTFIEKKYG…QVRINVVEVE (72 aa). A disordered region spans residues 216–243; sequence QTIPVGANPKRKASRRPQQFEDRSNENS. Over residues 233-243 the composition is skewed to basic and acidic residues; sequence QQFEDRSNENS.

Belongs to the universal ribosomal protein uS3 family. In terms of assembly, part of the 30S ribosomal subunit. Forms a tight complex with proteins S10 and S14.

Binds the lower part of the 30S subunit head. Binds mRNA in the 70S ribosome, positioning it for translation. This chain is Small ribosomal subunit protein uS3, found in Prochlorococcus marinus (strain MIT 9215).